A 420-amino-acid chain; its full sequence is MRRRRSRVEGAARALPEAVAALSRCLPAGPSPEIFRRAKFDRPEAAPVLWQLLLRVLSPLAANNTWTDLAPEAQACVVKSALGSQGYPRSVLLQFPDGSSQGSRELLLALSWLLARGPLLEQLLAQTRVQLGDQLPQWEAPTSPGPPAPFVEPKSPVDLRLVEWLMGRLRFRWRCLISSQQEQCILLSKIHLYTQGCHSQQSLGHLSVAETEMLRDPESGQQLLQALESENIRLEAALEWRRRELVFWQWMDTVLDTCSPETPAVTSQPTFLPEISEGGLGELESVKQELQALQEELREVSEPRRAAWEARVGGLGQGPEWSNSRKALQEAVQQELAALQGSWEQSSTPGQPQRPHRLVRSKDGAPRPQGLQAAEVIRTLSAKEACLKKALHQLQRQCQQELARLAGALPGLIWILPPEH.

A coiled-coil region spans residues 276 to 340; sequence SEGGLGELES…AVQQELAALQ (65 aa). The span at 342-351 shows a compositional bias: polar residues; it reads SWEQSSTPGQ. The disordered stretch occupies residues 342–369; the sequence is SWEQSSTPGQPQRPHRLVRSKDGAPRPQ. Residues 377-409 are a coiled coil; sequence IRTLSAKEACLKKALHQLQRQCQQELARLAGAL.

Interacts with TEDC2. Found in a complex with TEDC1, TEDC2, TUBE1 and TUBD1.

It is found in the cell projection. The protein resides in the cilium. It localises to the cytoplasm. The protein localises to the cytoskeleton. Its subcellular location is the microtubule organizing center. It is found in the centrosome. The protein resides in the centriole. Functionally, acts as a positive regulator of ciliary hedgehog signaling. Required for centriole stability. May play a role in counteracting perturbation of actin filaments, such as after treatment with the actin depolymerizing microbial metabolite Chivosazole F. The sequence is that of Tubulin epsilon and delta complex protein 1 from Mus musculus (Mouse).